A 177-amino-acid chain; its full sequence is O-acetyl-ADP-ribose deacetylase (177 aa).

One can recognise a Macro domain in the interval 1–175 (MKTRIHVVQG…LYERLLTQQG (175 aa)). Substrate-binding positions include 11–12 (DI), Asn25, 33–35 (GVD), and 122–126 (STGVY). The active-site Proton acceptor is Asp35.

Belongs to the MacroD-type family. YmdB subfamily. As to quaternary structure, homodimer. Interacts with RNase III.

It catalyses the reaction 3''-O-acetyl-ADP-D-ribose + H2O = ADP-D-ribose + acetate + H(+). The enzyme catalyses 2''-O-acetyl-ADP-D-ribose + H2O = ADP-D-ribose + acetate + H(+). Functionally, deacetylates O-acetyl-ADP ribose to yield ADP-ribose and free acetate. Down-regulates ribonuclease 3 (RNase III) activity. Acts by interacting directly with the region of the ribonuclease that is required for dimerization/activation. In Shigella flexneri serotype 5b (strain 8401), this protein is O-acetyl-ADP-ribose deacetylase.